The sequence spans 276 residues: MLMITSFANPRVAQAFVDYMATQGIILTIQQHTQSDVWLADESQAGRVRAELARFLENPADPRYLAASWQSGQTNSGLRYQRFPFFATLRHNAGPFTWAILLICIAVFILQNLLGDQPVMIWLAWPYDPSLQFEAWRYFSHAFMHFSLMHILFNLLWWWYLGGAVEKRIGSGKLVVITVISALLSGFVQHQFSGPWFGGLSGVVYALMGYVWLRGERDPQSGIYLQRGLILFSLVWLIAGWFDVFGMAIANGAHVAGLATGLAMAFVDTLHGRKRA.

Transmembrane regions (helical) follow at residues 94–114 (GPFT…QNLL), 142–162 (AFMH…WYLG), 169–189 (IGSG…GFVQ), 192–212 (FSGP…GYVW), 229–249 (LILF…GMAI), and 252–272 (GAHV…TLHG). The Nucleophile role is filled by serine 201. Histidine 254 is an active-site residue.

It belongs to the peptidase S54 family.

It is found in the cell inner membrane. It catalyses the reaction Cleaves type-1 transmembrane domains using a catalytic dyad composed of serine and histidine that are contributed by different transmembrane domains.. Functionally, rhomboid-type serine protease that catalyzes intramembrane proteolysis. The protein is Rhomboid protease GlpG of Klebsiella pneumoniae subsp. pneumoniae (strain ATCC 700721 / MGH 78578).